Here is a 441-residue protein sequence, read N- to C-terminus: Proline--tRNA ligase (441 aa).

It belongs to the class-II aminoacyl-tRNA synthetase family. ProS type 2 subfamily. In terms of assembly, homodimer.

Its subcellular location is the cytoplasm. It catalyses the reaction tRNA(Pro) + L-proline + ATP = L-prolyl-tRNA(Pro) + AMP + diphosphate. Catalyzes the attachment of proline to tRNA(Pro) in a two-step reaction: proline is first activated by ATP to form Pro-AMP and then transferred to the acceptor end of tRNA(Pro). This is Proline--tRNA ligase from Bartonella tribocorum (strain CIP 105476 / IBS 506).